Consider the following 368-residue polypeptide: mRNA export factor (368 aa).

Positions 15 to 34 are disordered; that stretch reads TSMFGSTTTDNHNPMKDIEV. 7 WD repeats span residues 37-79, 84-114, 125-157, 168-206, 215-255, 271-301, and 310-346; these read SPDD…QTIP, MHTG…KMWD, QHDA…KFWD, QLPE…EFRR, HRCV…KDNF, QDIY…SFWD, and TSEQ…EFYN. Residue Thr229 is modified to Phosphothreonine.

This sequence belongs to the WD repeat rae1 family. Interacts with NUMA1 (via N-terminal end of the coiled-coil domain); this interaction promotes spindle formation in mitosis. Interacts with NUP98. Interacts with MYCBP2. Interacts with USP11.

The protein localises to the cytoplasm. It is found in the nucleus. Its subcellular location is the cytoskeleton. The protein resides in the spindle pole. Functionally, plays a role in mitotic bipolar spindle formation. Binds mRNA. May function in nucleocytoplasmic transport and in directly or indirectly attaching cytoplasmic mRNPs to the cytoskeleton. In Mus musculus (Mouse), this protein is mRNA export factor (Rae1).